The primary structure comprises 119 residues: Large ribosomal subunit protein eL31y (119 aa).

It belongs to the eukaryotic ribosomal protein eL31 family.

This Arabidopsis thaliana (Mouse-ear cress) protein is Large ribosomal subunit protein eL31y (RPL31B).